Consider the following 93-residue polypeptide: Co-chaperonin GroES (93 aa).

The protein belongs to the GroES chaperonin family. Heptamer of 7 subunits arranged in a ring. Interacts with the chaperonin GroEL.

Its subcellular location is the cytoplasm. Its function is as follows. Together with the chaperonin GroEL, plays an essential role in assisting protein folding. The GroEL-GroES system forms a nano-cage that allows encapsulation of the non-native substrate proteins and provides a physical environment optimized to promote and accelerate protein folding. GroES binds to the apical surface of the GroEL ring, thereby capping the opening of the GroEL channel. The polypeptide is Co-chaperonin GroES (Streptococcus intermedius).